A 510-amino-acid polypeptide reads, in one-letter code: Anaerobic nitric oxide reductase transcription regulator NorR (510 aa).

The Sigma-54 factor interaction domain occupies 188–417 (IIGNSQGMRT…LEHVIKRAAV (230 aa)). ATP contacts are provided by residues 216 to 223 (GETGVGKE) and 279 to 288 (ADGGTLFLDE). A DNA-binding region (H-T-H motif) is located at residues 486 to 505 (WAATARQLELDSGNLHRLAK).

Its pathway is nitrogen metabolism; nitric oxide reduction. Required for the expression of anaerobic nitric oxide (NO) reductase, acts as a transcriptional activator for at least the norVW operon. Activation also requires sigma-54. The sequence is that of Anaerobic nitric oxide reductase transcription regulator NorR from Vibrio vulnificus (strain CMCP6).